The sequence spans 314 residues: tRNA pseudouridine synthase B (314 aa).

Catalysis depends on Asp47, which acts as the Nucleophile.

It belongs to the pseudouridine synthase TruB family. Type 1 subfamily.

The enzyme catalyses uridine(55) in tRNA = pseudouridine(55) in tRNA. Responsible for synthesis of pseudouridine from uracil-55 in the psi GC loop of transfer RNAs. This Vibrio parahaemolyticus serotype O3:K6 (strain RIMD 2210633) protein is tRNA pseudouridine synthase B.